We begin with the raw amino-acid sequence, 475 residues long: Ribulose bisphosphate carboxylase large chain (475 aa).

A propeptide spanning residues methionine 1–serine 2 is cleaved from the precursor. Residue proline 3 is modified to N-acetylproline. Lysine 14 is modified (N6,N6,N6-trimethyllysine). Asparagine 123 and threonine 173 together coordinate substrate. The active-site Proton acceptor is lysine 175. Lysine 177 serves as a coordination point for substrate. Positions 201, 203, and 204 each coordinate Mg(2+). Residue lysine 201 is modified to N6-carboxylysine. Residue histidine 294 is the Proton acceptor of the active site. Substrate contacts are provided by arginine 295, histidine 327, and serine 379.

The protein belongs to the RuBisCO large chain family. Type I subfamily. In terms of assembly, heterohexadecamer of 8 large chains and 8 small chains; disulfide-linked. The disulfide link is formed within the large subunit homodimers. Mg(2+) is required as a cofactor. Post-translationally, the disulfide bond which can form in the large chain dimeric partners within the hexadecamer appears to be associated with oxidative stress and protein turnover.

It is found in the plastid. The protein resides in the chloroplast. The catalysed reaction is 2 (2R)-3-phosphoglycerate + 2 H(+) = D-ribulose 1,5-bisphosphate + CO2 + H2O. It carries out the reaction D-ribulose 1,5-bisphosphate + O2 = 2-phosphoglycolate + (2R)-3-phosphoglycerate + 2 H(+). Functionally, ruBisCO catalyzes two reactions: the carboxylation of D-ribulose 1,5-bisphosphate, the primary event in carbon dioxide fixation, as well as the oxidative fragmentation of the pentose substrate in the photorespiration process. Both reactions occur simultaneously and in competition at the same active site. In Spirogyra maxima (Green alga), this protein is Ribulose bisphosphate carboxylase large chain.